Reading from the N-terminus, the 93-residue chain is Integration host factor subunit beta (93 aa).

This sequence belongs to the bacterial histone-like protein family. In terms of assembly, heterodimer of an alpha and a beta chain.

Functionally, this protein is one of the two subunits of integration host factor, a specific DNA-binding protein that functions in genetic recombination as well as in transcriptional and translational control. The chain is Integration host factor subunit beta from Aliivibrio salmonicida (strain LFI1238) (Vibrio salmonicida (strain LFI1238)).